The following is a 139-amino-acid chain: Large ribosomal subunit protein bL17 (139 aa).

Belongs to the bacterial ribosomal protein bL17 family. As to quaternary structure, part of the 50S ribosomal subunit. Contacts protein L32.

This chain is Large ribosomal subunit protein bL17, found in Afipia carboxidovorans (strain ATCC 49405 / DSM 1227 / KCTC 32145 / OM5) (Oligotropha carboxidovorans).